A 428-amino-acid chain; its full sequence is Glutamate-1-semialdehyde 2,1-aminomutase 1 (428 aa).

Position 268 is an N6-(pyridoxal phosphate)lysine (Lys-268).

Belongs to the class-III pyridoxal-phosphate-dependent aminotransferase family. HemL subfamily. Homodimer. Pyridoxal 5'-phosphate serves as cofactor.

Its subcellular location is the cytoplasm. The enzyme catalyses (S)-4-amino-5-oxopentanoate = 5-aminolevulinate. The protein operates within porphyrin-containing compound metabolism; protoporphyrin-IX biosynthesis; 5-aminolevulinate from L-glutamyl-tRNA(Glu): step 2/2. The sequence is that of Glutamate-1-semialdehyde 2,1-aminomutase 1 from Bacillus cereus (strain G9842).